A 187-amino-acid polypeptide reads, in one-letter code: Protein SCM4 (187 aa).

3 consecutive transmembrane segments (helical) span residues 11 to 31, 45 to 65, and 80 to 100; these read IAVS…VISI, VLCT…GAFG, and LLCG…VSLF. A compositionally biased stretch (basic and acidic residues) spans 114–134; that stretch reads DLEKQKDEKLPQHHPEVKDGE. Residues 114–135 form a disordered region; the sequence is DLEKQKDEKLPQHHPEVKDGEA. A helical membrane pass occupies residues 162 to 182; it reads MSLHMSIVTGITIFTFGKCIL.

Belongs to the ATG33 family.

The protein resides in the membrane. This is Protein SCM4 (SCM4) from Saccharomyces cerevisiae (strain ATCC 204508 / S288c) (Baker's yeast).